The following is an 810-amino-acid chain: Phenylalanine--tRNA ligase beta subunit (810 aa).

A tRNA-binding domain is found at 39–150; the sequence is RSWAAGVVLG…LDLPSGSPVG (112 aa). Positions 407–495 constitute a B5 domain; that stretch reads RGEAIINLRL…RLYGYDHFCE (89 aa). Residues Asp473, Asp479, Glu482, and Glu483 each coordinate Mg(2+). Residues 716 to 809 enclose the FDX-ACB domain; sequence SPYPAVARDL…LTKQFAVSLR (94 aa).

This sequence belongs to the phenylalanyl-tRNA synthetase beta subunit family. Type 1 subfamily. In terms of assembly, tetramer of two alpha and two beta subunits. The cofactor is Mg(2+).

The protein localises to the cytoplasm. It catalyses the reaction tRNA(Phe) + L-phenylalanine + ATP = L-phenylalanyl-tRNA(Phe) + AMP + diphosphate + H(+). In Synechocystis sp. (strain ATCC 27184 / PCC 6803 / Kazusa), this protein is Phenylalanine--tRNA ligase beta subunit (pheT).